The chain runs to 103 residues: Small ribosomal subunit protein bS6c (103 aa).

Belongs to the bacterial ribosomal protein bS6 family.

The protein localises to the plastid. It is found in the chloroplast. In terms of biological role, binds together with bS18 to 16S ribosomal RNA. In Thalassiosira pseudonana (Marine diatom), this protein is Small ribosomal subunit protein bS6c.